We begin with the raw amino-acid sequence, 89 residues long: MPAPRFKSGSFKKISKRGPGNKTLTHHRRSKVSKAKCGACGALLNGVPRGRKIEIAKLSKTEKRPERPYGGFLCPKCLKRLMIEKARNL.

The interval 1–32 (MPAPRFKSGSFKKISKRGPGNKTLTHHRRSKV) is disordered.

This sequence belongs to the eukaryotic ribosomal protein eL34 family.

The protein is Large ribosomal subunit protein eL34 of Methanococcus aeolicus (strain ATCC BAA-1280 / DSM 17508 / OCM 812 / Nankai-3).